A 160-amino-acid chain; its full sequence is Ribosome maturation factor RimP (160 aa).

It belongs to the RimP family.

It localises to the cytoplasm. In terms of biological role, required for maturation of 30S ribosomal subunits. The protein is Ribosome maturation factor RimP of Syntrophus aciditrophicus (strain SB).